We begin with the raw amino-acid sequence, 523 residues long: Fidgetin-like protein 1 (523 aa).

Residues 114–154 (PVQQAVKSRPEGQFPESRNNSTKKIDAQQYSSESSSQSGFG) are disordered. A compositionally biased stretch (low complexity) spans 141-151 (QQYSSESSSQS). Residues A253 and 293 to 298 (GTGKTL) each bind ATP.

It belongs to the AAA ATPase family. In terms of assembly, hexamer. It depends on Mg(2+) as a cofactor.

It catalyses the reaction ATP + H2O = ADP + phosphate + H(+). The polypeptide is Fidgetin-like protein 1 (Drosophila melanogaster (Fruit fly)).